We begin with the raw amino-acid sequence, 829 residues long: Protein Jade-1 (829 aa).

Polar residues predominate over residues 1 to 10 (MKRSRVPSTS). The tract at residues 1-40 (MKRSRVPSTSEDSDNGSNSTSWSQHSNSKHRKQSGKRPSE) is disordered. Low complexity predominate over residues 15–26 (NGSNSTSWSQHS). The PHD-type 1 zinc finger occupies 196 to 246 (DVVCDVCQSPDGEDGNEMVFCDKCNICVHQACYGILKVPEGSWLCRTCALG). A C2HC pre-PHD-type zinc finger spans residues 248-282 (FPKCHLCPKKGGAMKPTRSGTKWVHVSCALWIPEV). Residues 306-362 (LICCLCKEKTGACIQCSAKSCRVAFHVTCGLHCGLKMNTILTEADEVKFKSFCPKHS) form a PHD-type 2 zinc finger. 3 disordered regions span residues 368-408 (EEEG…PEET), 556-651 (PPVP…RRKS), and 697-829 (ATAP…VLAS). A compositionally biased stretch (basic and acidic residues) spans 374 to 390 (DRPVKVPTREDRSRNRG). 3 stretches are compositionally biased toward polar residues: residues 394–405 (SASSQTRLSQNP), 570–586 (GQNS…NSYR), and 607–619 (SGDS…VMSA). Residues 622 to 648 (RRSEGRTRSGESHRKEEESERPLEDRR) are compositionally biased toward basic and acidic residues. A compositionally biased stretch (polar residues) spans 697–714 (ATAPNMYSGSPRKTNASH). Positions 738 to 754 (KRSERTSAGRQTERQEA) are enriched in basic and acidic residues. Over residues 762–774 (SSLKTFSTSPSSP) the composition is skewed to low complexity. A compositionally biased stretch (basic and acidic residues) spans 782–792 (TGSENRRHLEE).

This sequence belongs to the JADE family. Component of the HBO1 complex composed.

The protein localises to the nucleus. It localises to the chromosome. Its subcellular location is the cytoplasm. The protein resides in the cytoskeleton. It is found in the cilium basal body. Its function is as follows. Scaffold subunit of some HBO1 complexes, which have a histone H4 acetyltransferase activity. Plays a key role in HBO1 complex by directing KAT7/HBO1 specificity towards histone H4 acetylation (H4K5ac, H4K8ac and H4K12ac), regulating DNA replication initiation, regulating DNA replication initiation. This is Protein Jade-1 (jade1) from Danio rerio (Zebrafish).